A 77-amino-acid polypeptide reads, in one-letter code: Putative regulatory protein tsl2331 (77 aa).

Belongs to the RemA family.

This chain is Putative regulatory protein tsl2331, found in Thermosynechococcus vestitus (strain NIES-2133 / IAM M-273 / BP-1).